Consider the following 210-residue polypeptide: Outer-membrane lipoprotein carrier protein (210 aa).

The signal sequence occupies residues 1 to 23 (MKKRIQKTILTVLFSSLSSIAFA).

The protein belongs to the LolA family. In terms of assembly, monomer.

It localises to the periplasm. Its function is as follows. Participates in the translocation of lipoproteins from the inner membrane to the outer membrane. Only forms a complex with a lipoprotein if the residue after the N-terminal Cys is not an aspartate (The Asp acts as a targeting signal to indicate that the lipoprotein should stay in the inner membrane). This is Outer-membrane lipoprotein carrier protein from Haemophilus ducreyi (strain 35000HP / ATCC 700724).